A 275-amino-acid polypeptide reads, in one-letter code: Polyamine aminopropyltransferase (275 aa).

In terms of domain architecture, PABS spans 2 to 235; the sequence is ELWFTEKQTK…GLWTFTIGSK (234 aa). Q31 lines the S-methyl-5'-thioadenosine pocket. Spermidine is bound by residues H62 and D86. S-methyl-5'-thioadenosine contacts are provided by residues E106 and 137–138; that span reads DG. D155 (proton acceptor) is an active-site residue. Residue 155-158 coordinates spermidine; sequence DSTE. Position 162 (P162) interacts with S-methyl-5'-thioadenosine.

The protein belongs to the spermidine/spermine synthase family. Homodimer or homotetramer.

The protein resides in the cytoplasm. It catalyses the reaction S-adenosyl 3-(methylsulfanyl)propylamine + putrescine = S-methyl-5'-thioadenosine + spermidine + H(+). It functions in the pathway amine and polyamine biosynthesis; spermidine biosynthesis; spermidine from putrescine: step 1/1. Its function is as follows. Catalyzes the irreversible transfer of a propylamine group from the amino donor S-adenosylmethioninamine (decarboxy-AdoMet) to putrescine (1,4-diaminobutane) to yield spermidine. The sequence is that of Polyamine aminopropyltransferase from Bacillus cereus (strain ATCC 10987 / NRS 248).